Reading from the N-terminus, the 90-residue chain is Conotoxin Im6.2 (90 aa).

The first 18 residues, 1 to 18 (MKLTILLLVAALLVLTQA), serve as a signal peptide directing secretion. A propeptide spanning residues 19 to 29 (RTERRRVKSRK) is cleaved from the precursor. Disulfide bonds link Cys61/Cys75, Cys68/Cys79, and Cys74/Cys84. Glu89 is modified (glutamic acid 1-amide).

It belongs to the conotoxin O2 superfamily. In terms of tissue distribution, expressed by the venom duct.

The protein resides in the secreted. Its function is as follows. Probable neurotoxin. This Conus imperialis (Imperial cone) protein is Conotoxin Im6.2.